A 257-amino-acid chain; its full sequence is Large ribosomal subunit protein uL2 (257 aa).

Glycyl lysine isopeptide (Lys-Gly) (interchain with G-Cter in SUMO2) cross-links involve residues K42 and K149. The segment at 207 to 232 (VEHPFGGGNHQHIGKPSTIRRDAPAG) is disordered. Residue H216 is modified to (3S)-3-hydroxyhistidine. Glycyl lysine isopeptide (Lys-Gly) (interchain with G-Cter in SUMO2) cross-links involve residues K234 and K250.

It belongs to the universal ribosomal protein uL2 family. In terms of assembly, component of the large ribosomal subunit. Interacts with CRY1. Post-translationally, hydroxylated on His-216 by RIOX1. The modification is impaired by hypoxia.

The protein resides in the cytoplasm. In terms of biological role, component of the large ribosomal subunit. The ribosome is a large ribonucleoprotein complex responsible for the synthesis of proteins in the cell. This is Large ribosomal subunit protein uL2 (RPL8) from Bos taurus (Bovine).